The primary structure comprises 344 residues: MTKTLTIRRPDDWHLHLRDGAMLRAVLPETTAHFARAIIMPNLVPPVVTFAQAQDYHARILAALPEGAEFTPLMTLYLTEDTDPDDVAAAHANGLVHAVKLYPAGATTNSASGVANFDNIRAVLERMAEIGLPLCVHGEVTDDDIDIFDREAVFIDRVLDPIRQATPGLRVVMEHITTRNAVDYATAQDDTLGATITTHHLVINRNHILAGGIKPHYYCLPVAKREEHRLALRAAATSGDARFFLGTDSAPHTDANKLLPCGCAGCFTATNTMSILAHVFEEEQALERLEGFASLHGPAFYRLPANEARLTLTKTPATFPSHIETEDGPVTVFDPGFVPNWTVV.

Residues His-14 and His-16 each coordinate Zn(2+). Residues His-16–Arg-18 and Asn-42 each bind substrate. Residues Lys-100, His-137, and His-175 each contribute to the Zn(2+) site. Lys-100 is subject to N6-carboxylysine. His-137 serves as a coordination point for substrate. Leu-220 contributes to the substrate binding site. Asp-248 lines the Zn(2+) pocket. Residue Asp-248 is part of the active site. Positions 252 and 264 each coordinate substrate.

The protein belongs to the metallo-dependent hydrolases superfamily. DHOase family. Class II DHOase subfamily. In terms of assembly, homodimer. Requires Zn(2+) as cofactor.

It catalyses the reaction (S)-dihydroorotate + H2O = N-carbamoyl-L-aspartate + H(+). Its pathway is pyrimidine metabolism; UMP biosynthesis via de novo pathway; (S)-dihydroorotate from bicarbonate: step 3/3. In terms of biological role, catalyzes the reversible cyclization of carbamoyl aspartate to dihydroorotate. This is Dihydroorotase from Roseobacter denitrificans (strain ATCC 33942 / OCh 114) (Erythrobacter sp. (strain OCh 114)).